The following is a 622-amino-acid chain: Solute carrier family 2, facilitated glucose transporter member 12 (622 aa).

The segment at 1–26 (MVPVENTEGPNLLNQKGREAETEGSC) is disordered. Residues 1-44 (MVPVENTEGPNLLNQKGREAETEGSCGASGGGHPACAGGPSMFT) are Cytoplasmic-facing. Residues 45–65 (FLTSVTAAISGLLVGYELGLI) form a helical membrane-spanning segment. Topologically, residues 66–84 (SGALLQIRTLLALTCHEQE) are extracellular. The chain crosses the membrane as a helical span at residues 85-105 (MVVSSLLIGAFLASLTGGVLI). At 106 to 111 (DRYGRR) the chain is on the cytoplasmic side. Residues 112–132 (LAIILSSCLLGLGSLVLIMSL) traverse the membrane as a helical segment. Residues 133–141 (SYTLLIMGR) lie on the Extracellular side of the membrane. Residues 142–162 (VAIGVSISLSSIATCVYIAEI) form a helical membrane-spanning segment. Residues 163 to 168 (APQHRR) are Cytoplasmic-facing. Residues 169-189 (GLLVSLNELMIVTGILFAYIS) form a helical membrane-spanning segment. The Extracellular segment spans residues 190 to 201 (NYAFANISNGWK). A glycan (N-linked (GlcNAc...) asparagine) is linked at Asn195. Residues 202–222 (YMFGLVIPLGVLQAIAMYFLP) form a helical membrane-spanning segment. The Cytoplasmic portion of the chain corresponds to 223 to 282 (PSPRFLVMKGQEESAGKVLRKLRVISDTTEELTLIKSSLKDEYQYSFWDLFRSKDNMRTR). Residues 283–303 (ILIGLTLVFFVQTTGQPNILF) form a helical membrane-spanning segment. At 304 to 321 (YASTVLKSVGFQSNEAAS) the chain is on the extracellular side. The chain crosses the membrane as a helical span at residues 322 to 342 (LASTGVGVVKVVSTIPATLLV). Topologically, residues 343–349 (DHIGSKT) are cytoplasmic. The chain crosses the membrane as a helical span at residues 350–370 (FLCIGSSVMSASLLTMGIVNL). Topologically, residues 371 to 471 (NINMNFTNIC…PAAYKWLSLA (101 aa)) are extracellular. N-linked (GlcNAc...) asparagine glycans are attached at residues Asn375, Asn387, Asn400, and Asn405. A helical transmembrane segment spans residues 472–492 (SLLVYVAAFSIGLGPMPWLVL). Topologically, residues 493–503 (SEIFPGGIRGR) are cytoplasmic. The chain crosses the membrane as a helical span at residues 504–524 (AMALTSSMNWGVNLLISLTFL). Residues 525–533 (TVTDLIGLS) are Extracellular-facing. A helical membrane pass occupies residues 534 to 554 (WVCFIYTIMSLASLAFVVLFI). Residues 555–622 (PETKGCSLEQ…GQSQRPSPDT (68 aa)) are Cytoplasmic-facing.

This sequence belongs to the major facilitator superfamily. Sugar transporter (TC 2.A.1.1) family. Glucose transporter subfamily. As to expression, expressed in skeletal muscle, heart, brain, kidney, spleen, adipose tissues and to a lesser extent in small intestine and lung.

The protein resides in the cell membrane. It localises to the endomembrane system. Its subcellular location is the cytoplasm. The protein localises to the perinuclear region. It catalyses the reaction D-glucose(out) = D-glucose(in). Insulin-independent facilitative glucose transporter. The polypeptide is Solute carrier family 2, facilitated glucose transporter member 12 (Mus musculus (Mouse)).